We begin with the raw amino-acid sequence, 226 residues long: UPF0173 metal-dependent hydrolase Msed_2125 (226 aa).

This sequence belongs to the UPF0173 family.

This is UPF0173 metal-dependent hydrolase Msed_2125 from Metallosphaera sedula (strain ATCC 51363 / DSM 5348 / JCM 9185 / NBRC 15509 / TH2).